We begin with the raw amino-acid sequence, 905 residues long: Coatomer subunit beta' (905 aa).

8 WD repeats span residues Ala13 to Thr52, Val55 to Met94, Ala97 to Gln136, Gly140 to Thr180, Gly183 to Thr224, Gly227 to Thr266, Ser350 to Phe388, and Ser390 to Lys425. Residue Lys627 is modified to N6-acetyllysine. A WD 9 repeat occupies Ile746–Lys783. Residues Glu837–Glu873 form a disordered region. Ser859 bears the Phosphoserine mark. A coiled-coil region spans residues Gln867 to Ile891.

It belongs to the WD repeat COPB2 family. As to quaternary structure, oligomeric complex that consists of at least the alpha, beta, beta', gamma, delta, epsilon and zeta subunits. Probably interacts with PEX11A. Interacts with SCYL1. Interacts with JAGN1.

The protein localises to the cytoplasm. The protein resides in the cytosol. It is found in the golgi apparatus membrane. Its subcellular location is the cytoplasmic vesicle. It localises to the COPI-coated vesicle membrane. Functionally, the coatomer is a cytosolic protein complex that binds to dilysine motifs and reversibly associates with Golgi non-clathrin-coated vesicles, which further mediate biosynthetic protein transport from the ER, via the Golgi up to the trans Golgi network. Coatomer complex is required for budding from Golgi membranes, and is essential for the retrograde Golgi-to-ER transport of dilysine-tagged proteins. In mammals, the coatomer can only be recruited by membranes associated to ADP-ribosylation factors (ARFs), which are small GTP-binding proteins; the complex also influences the Golgi structural integrity, as well as the processing, activity, and endocytic recycling of LDL receptors. Its function is as follows. This coatomer complex protein, essential for Golgi budding and vesicular trafficking, is a selective binding protein (RACK) for protein kinase C, epsilon type. It binds to Golgi membranes in a GTP-dependent manner. This is Coatomer subunit beta' (Copb2) from Mus musculus (Mouse).